The sequence spans 262 residues: Ornithine carbamoyltransferase (262 aa).

Carbamoyl phosphate contacts are provided by residues 3–7, glutamine 30, arginine 54, and 81–84; these read STRTR and HPTQ. L-ornithine-binding positions include asparagine 114, aspartate 178, and 182–183; that span reads SM. Residues 219 to 222 and threonine 247 each bind carbamoyl phosphate; that span reads HCLP.

The protein belongs to the aspartate/ornithine carbamoyltransferase superfamily. OTCase family.

It localises to the cytoplasm. The enzyme catalyses carbamoyl phosphate + L-ornithine = L-citrulline + phosphate + H(+). The protein operates within amino-acid biosynthesis; L-arginine biosynthesis; L-arginine from L-ornithine and carbamoyl phosphate: step 1/3. Reversibly catalyzes the transfer of the carbamoyl group from carbamoyl phosphate (CP) to the N(epsilon) atom of ornithine (ORN) to produce L-citrulline. In Neisseria mucosa, this protein is Ornithine carbamoyltransferase (argF).